The chain runs to 379 residues: Cobalt-precorrin-5B C(1)-methyltransferase (379 aa).

This sequence belongs to the CbiD family.

It catalyses the reaction Co-precorrin-5B + S-adenosyl-L-methionine = Co-precorrin-6A + S-adenosyl-L-homocysteine. The protein operates within cofactor biosynthesis; adenosylcobalamin biosynthesis; cob(II)yrinate a,c-diamide from sirohydrochlorin (anaerobic route): step 6/10. In terms of biological role, catalyzes the methylation of C-1 in cobalt-precorrin-5B to form cobalt-precorrin-6A. This Salmonella dublin (strain CT_02021853) protein is Cobalt-precorrin-5B C(1)-methyltransferase.